The sequence spans 390 residues: cAMP-dependent protein kinase regulatory subunit (390 aa).

Over residues 1-17 (MSASGFTSPFGANSNPF) the composition is skewed to polar residues. The tract at residues 1-81 (MSASGFTSPF…RPQNPDGYPA (81 aa)) is disordered. Positions 1–129 (MSASGFTSPF…RLKKAIQGNF (129 aa)) are dimerization and phosphorylation. Residue S90 is modified to Phosphoserine. 3',5'-cyclic AMP is bound by residues 130–261 (LFSH…EEVP), E208, R217, 262–383 (ILST…GVEE), E329, and R338.

Belongs to the cAMP-dependent kinase regulatory chain family. As to quaternary structure, tetramer, composed of 2 regulatory (R) and 2 catalytic (C) subunits. In the presence of cAMP it dissociates into 2 active monomeric C subunits and an R dimer.

In Pyricularia oryzae (strain 70-15 / ATCC MYA-4617 / FGSC 8958) (Rice blast fungus), this protein is cAMP-dependent protein kinase regulatory subunit (SUM1).